An 895-amino-acid chain; its full sequence is Procollagen lysyl hydroxylase and glycosyltransferase (895 aa).

Residues 1-194 form a lysyl hydroxylase region region; that stretch reads MISRTYVINL…PSDEFIPIMH (194 aa). A glucosyl transferase region region spans residues 537–895; the sequence is YYFYISGDCI…KRYILVSFVN (359 aa). One can recognise a Fe2OG dioxygenase domain in the interval 805 to 895; that stretch reads DINLAFVVKY…KRYILVSFVN (91 aa). Fe cation-binding residues include His825, Asp827, and His877. The active site involves Arg887.

It depends on Fe cation as a cofactor. L-ascorbate serves as cofactor.

The enzyme catalyses L-lysyl-[collagen] + 2-oxoglutarate + O2 = (5R)-5-hydroxy-L-lysyl-[collagen] + succinate + CO2. Displays two enzymatic activities involved in procollagen processing. Forms hydroxylysine residues in -Xaa-Lys-Gly- sequences in collagens. These hydroxylysines are subsequentially glucosylated by a glucosyltransferase activity. Collagen post-translationally modified is detected in mimivirus virion. The sequence is that of Procollagen lysyl hydroxylase and glycosyltransferase from Acanthamoeba polyphaga (Amoeba).